We begin with the raw amino-acid sequence, 282 residues long: NADPH-dependent 7-cyano-7-deazaguanine reductase (282 aa).

88 to 90 (IES) provides a ligand contact to substrate. 90–91 (SK) is a binding site for NADPH. The active-site Thioimide intermediate is C190. D197 (proton donor) is an active-site residue. A substrate-binding site is contributed by 229 to 230 (HE). 258–259 (RG) provides a ligand contact to NADPH.

It belongs to the GTP cyclohydrolase I family. QueF type 2 subfamily. As to quaternary structure, homodimer.

It localises to the cytoplasm. The catalysed reaction is 7-aminomethyl-7-carbaguanine + 2 NADP(+) = 7-cyano-7-deazaguanine + 2 NADPH + 3 H(+). The protein operates within tRNA modification; tRNA-queuosine biosynthesis. Functionally, catalyzes the NADPH-dependent reduction of 7-cyano-7-deazaguanine (preQ0) to 7-aminomethyl-7-deazaguanine (preQ1). The polypeptide is NADPH-dependent 7-cyano-7-deazaguanine reductase (Escherichia coli (strain SMS-3-5 / SECEC)).